We begin with the raw amino-acid sequence, 410 residues long: Transcription factor PHYTOCHROME INTERACTING FACTOR-LIKE 13 (410 aa).

The segment covering 82 to 92 (AAAAAGPSSHH) has biased composition (low complexity). Disordered stretches follow at residues 82-110 (AAAA…MRSG) and 137-225 (CRDA…AEVH). Pro residues predominate over residues 93-104 (APPPDLPPPAAR). Over residues 187–197 (GREDSDSRSED) the composition is skewed to basic and acidic residues. Residues 209–219 (SSRRYGSKRRT) are compositionally biased toward basic residues. Residues 220-233 (RAAEVHNLSERRRR) are basic motif. The bHLH domain maps to 220–269 (RAAEVHNLSERRRRDRINEKMRALQELIPHCNKTDKASILDEAIEYLKSL). The interval 234 to 269 (DRINEKMRALQELIPHCNKTDKASILDEAIEYLKSL) is helix-loop-helix motif. The disordered stretch occupies residues 357–410 (PFLHPDGWQTVPPQVSGPYASGPQVAQQNQIPKASASTVLPNSGAEQPPTSDGI). Over residues 380 to 410 (QVAQQNQIPKASASTVLPNSGAEQPPTSDGI) the composition is skewed to polar residues.

Belongs to the bHLH protein family. As to quaternary structure, interacts with PRR1. Interacts with LF. In terms of tissue distribution, highly expressed in the node portions of the stem. Expressed in the leaves and the basal part of shoots.

It is found in the nucleus. Transcription factor that may act as negative regulator of phyB-dependent light signal transduction. Transcription activator that acts as a positive regulator of internode elongation. May function via regulation of cell wall-related genes. May play a role in a drought-associated growth-restriction mechanism in response to drought stress. This Oryza sativa subsp. japonica (Rice) protein is Transcription factor PHYTOCHROME INTERACTING FACTOR-LIKE 13.